The primary structure comprises 591 residues: Aspartate--tRNA ligase (591 aa).

Glu172 contributes to the L-aspartate binding site. The interval 196–199 (QLFK) is aspartate. Arg218 is an L-aspartate binding site. Residues 218–220 (RDE) and Gln227 each bind ATP. Residue His449 participates in L-aspartate binding. Glu483 lines the ATP pocket. Arg490 provides a ligand contact to L-aspartate. Residue 535–538 (GLDR) participates in ATP binding.

This sequence belongs to the class-II aminoacyl-tRNA synthetase family. Type 1 subfamily. As to quaternary structure, homodimer.

It is found in the cytoplasm. The catalysed reaction is tRNA(Asp) + L-aspartate + ATP = L-aspartyl-tRNA(Asp) + AMP + diphosphate. Its function is as follows. Catalyzes the attachment of L-aspartate to tRNA(Asp) in a two-step reaction: L-aspartate is first activated by ATP to form Asp-AMP and then transferred to the acceptor end of tRNA(Asp). This Actinobacillus pleuropneumoniae serotype 5b (strain L20) protein is Aspartate--tRNA ligase.